A 123-amino-acid chain; its full sequence is Small ribosomal subunit protein eS8 (123 aa).

The tract at residues 1-38 (MKDQGRSPRKRTGGRRRPNHKKKKHELGKDTVETQVGE) is disordered. Residues 7–26 (SPRKRTGGRRRPNHKKKKHE) are compositionally biased toward basic residues.

Part of the 30S ribosomal subunit.

In Haloarcula marismortui (strain ATCC 43049 / DSM 3752 / JCM 8966 / VKM B-1809) (Halobacterium marismortui), this protein is Small ribosomal subunit protein eS8 (rps8e).